The chain runs to 523 residues: Mitochondrial distribution and morphology protein 34 (523 aa).

An SMP-LTD domain is found at 1-200; the sequence is MSFKVNWKSL…LPTLIHQFSL (200 aa). A disordered region spans residues 489–523; the sequence is ELSMDRSGKRKQRNYGSATYESENPIVAPPPPYSH.

Belongs to the MDM34 family. As to quaternary structure, component of the ER-mitochondria encounter structure (ERMES) or MDM complex, composed of MMM1, MDM10, MDM12 and MDM34.

It localises to the mitochondrion outer membrane. In terms of biological role, component of the ERMES/MDM complex, which serves as a molecular tether to connect the endoplasmic reticulum (ER) and mitochondria. Components of this complex are involved in the control of mitochondrial shape and protein biogenesis, and function in nonvesicular lipid trafficking between the ER and mitochondria. MDM34 is required for the interaction of the ER-resident membrane protein MMM1 and the outer mitochondrial membrane-resident beta-barrel protein MDM10. The polypeptide is Mitochondrial distribution and morphology protein 34 (Scheffersomyces stipitis (strain ATCC 58785 / CBS 6054 / NBRC 10063 / NRRL Y-11545) (Yeast)).